Consider the following 43-residue polypeptide: Hainantoxin F5-22.36 (43 aa).

3 disulfides stabilise this stretch: cysteine 1–cysteine 19, cysteine 8–cysteine 24, and cysteine 18–cysteine 38.

Belongs to the neurotoxin 14 (magi-1) family. 02 (HWTX-XVIc) subfamily. Expressed by the venom gland.

Its subcellular location is the secreted. Functionally, probable ion channel inhibitor. The chain is Hainantoxin F5-22.36 from Cyriopagopus hainanus (Chinese bird spider).